A 467-amino-acid polypeptide reads, in one-letter code: Uronate isomerase (467 aa).

The protein belongs to the metallo-dependent hydrolases superfamily. Uronate isomerase family.

It catalyses the reaction D-glucuronate = D-fructuronate. It carries out the reaction aldehydo-D-galacturonate = keto-D-tagaturonate. Its pathway is carbohydrate metabolism; pentose and glucuronate interconversion. The protein is Uronate isomerase of Flavobacterium johnsoniae (strain ATCC 17061 / DSM 2064 / JCM 8514 / BCRC 14874 / CCUG 350202 / NBRC 14942 / NCIMB 11054 / UW101) (Cytophaga johnsonae).